Here is a 263-residue protein sequence, read N- to C-terminus: Oxidoreductase tpcG (263 aa).

It belongs to the avfA family. Specifically expressed in conidia.

It functions in the pathway secondary metabolite biosynthesis. Functionally, oxidoreductase; part of the gene cluster that mediates the biosynthesis of trypacidin, a mycotoxin with antiprotozoal activity and that plays a role in the infection process. The pathway begins with the synthesis of atrochrysone thioester by the polyketide synthase (PKS) tpcC. The atrochrysone carboxyl ACP thioesterase tpcB then breaks the thioester bond and releases the atrochrysone carboxylic acid from tpcC. The decarboxylase tpcK converts atrochrysone carboxylic acid to atrochrysone which is further reduced into emodin anthrone. The next step is performed by the emodin anthrone oxygenase tpcL that catalyzes the oxidation of emodinanthrone to emodin. Emodin O-methyltransferase encoded by tpcA catalyzes methylation of the 8-hydroxy group of emodin to form questin. Ring cleavage of questin by questin oxidase tpcI leads to desmethylsulochrin via several intermediates including questin epoxide. Another methylation step catalyzed by tpcM leads to the formation of sulochrin which is further converted to monomethylsulfochrin by tpcH. Finally, the tpcJ catalyzes the conversion of monomethylsulfochrin to trypacidin. Trypacidin is toxic for human pulmonary and bronchial epithelial cells by initiating the intracellular formation of nitric oxide (NO) and hydrogen peroxide (H(2)O(2)), thus triggering host necrotic cell death. The trypacidin pathway is also able to produce endocrocin via a distinct route from the endocrocin Enc pathway. The sequence is that of Oxidoreductase tpcG from Aspergillus fumigatus (strain ATCC MYA-4609 / CBS 101355 / FGSC A1100 / Af293) (Neosartorya fumigata).